A 298-amino-acid chain; its full sequence is Zinc-alpha-2-glycoprotein (298 aa).

Positions 1–20 (MVRMVPVLLSLLLLLGPAVP) are cleaved as a signal peptide. At Gln21 the chain carries Pyrrolidone carboxylic acid. A glycan (N-linked (GlcNAc...) (complex) asparagine) is linked at Asn109. Asn112 carries an N-linked (GlcNAc...) asparagine glycan. Cystine bridges form between Cys123–Cys186 and Cys225–Cys280. Residue Asn128 is glycosylated (N-linked (GlcNAc...) (complex) asparagine). Residues 207–292 (PSVVVTSHQA…QHSSLAQPLV (86 aa)) form the Ig-like C1-type domain. N-linked (GlcNAc...) asparagine glycosylation is present at Asn259.

Belongs to the MHC class I family. Interacts with PIP. N-glycosylated. N-glycan at Asn-128: Hex5HexNAc4. As to expression, blood plasma, seminal plasma, urine, saliva, sweat, epithelial cells of various human glands, liver.

It localises to the secreted. Functionally, stimulates lipid degradation in adipocytes and causes the extensive fat losses associated with some advanced cancers. May bind polyunsaturated fatty acids. In Homo sapiens (Human), this protein is Zinc-alpha-2-glycoprotein (AZGP1).